We begin with the raw amino-acid sequence, 411 residues long: Adenylosuccinate synthetase (411 aa).

GTP-binding positions include 11 to 17 and 39 to 41; these read GDEGKGK and GHT. Aspartate 12 acts as the Proton acceptor in catalysis. Mg(2+)-binding residues include aspartate 12 and glycine 39. IMP contacts are provided by residues 12 to 15, 37 to 40, threonine 121, arginine 135, glutamine 215, threonine 230, and arginine 294; these read DEGK and NAGH. Histidine 40 acts as the Proton donor in catalysis. Residue 290–296 coordinates substrate; sequence TTTKRPR. GTP-binding positions include arginine 296, 322 to 324, and 400 to 402; these read KLD and STS.

Belongs to the adenylosuccinate synthetase family. Homodimer. The cofactor is Mg(2+).

It is found in the cytoplasm. The enzyme catalyses IMP + L-aspartate + GTP = N(6)-(1,2-dicarboxyethyl)-AMP + GDP + phosphate + 2 H(+). It participates in purine metabolism; AMP biosynthesis via de novo pathway; AMP from IMP: step 1/2. Its function is as follows. Plays an important role in the de novo pathway of purine nucleotide biosynthesis. Catalyzes the first committed step in the biosynthesis of AMP from IMP. The chain is Adenylosuccinate synthetase from Helicobacter pylori (strain Shi470).